The primary structure comprises 186 residues: Transcription factor HES-3 (186 aa).

One can recognise a bHLH domain in the interval 1–49 (MEKKRRARINVSLEQLKSLLEKHYSHQIRKRKLEKADILELSVKYMRSL). The region spanning 65–99 (QPSGFRSCLPGVSQLLRRGDEVGSGLRCPLVPESA) is the Orange domain. The interval 128–186 (APAAGGPRSPPPLLLLPESLPGSSASVPPPQPASSRCAESPGLGLRVWRPWGSPGDDLN) is disordered. Over residues 142 to 153 (LLPESLPGSSAS) the composition is skewed to low complexity. The short motif at 175–178 (WRPW) is the WRPW motif element.

In terms of assembly, transcription repression requires formation of a complex with a corepressor protein of the Groucho/TLE family.

It localises to the nucleus. Transcriptional repressor of genes that require a bHLH protein for their transcription. In Homo sapiens (Human), this protein is Transcription factor HES-3 (HES3).